A 265-amino-acid polypeptide reads, in one-letter code: Apolipoprotein A-I (265 aa).

An N-terminal signal peptide occupies residues 1 to 18 (MKAVVLAVAALFLAGGEA). 2 consecutive repeat copies span residues 68–89 (LKLT…EQLG) and 90–111 (PVTQ…QEMN). A 10 X approximate tandem repeats region spans residues 68–265 (LKLTENLDTL…EEASKKLSSQ (198 aa)). Methionine sulfoxide is present on M110. A 3; half-length repeat occupies 112–122 (KDLADMKQKVQ). 3 consecutive repeat copies span residues 123–144 (PYME…QKVE), 145–166 (PLST…EKLA), and 167–188 (PLGA…TQLA). Residues 189–208 (PYSEQMRERLAERLAALRDS) form a 7; truncated repeat. M194 carries the post-translational modification Methionine sulfoxide. Repeat unit 8 spans residues 209–230 (PSLAEYQAKAHEHLKTLHEKAQ). A 9; half-length repeat occupies 231–241 (PALSDLGQGVL). Repeat 10 spans residues 242-265 (PVLESLKATLVGAIEEASKKLSSQ).

The protein belongs to the apolipoprotein A1/A4/E family. As to quaternary structure, homodimer. Interacts with APOA1BP and CLU. Component of a sperm activating protein complex (SPAP), consisting of APOA1, an immunoglobulin heavy chain, an immunoglobulin light chain and albumin. Interacts with NDRG1. Interacts with SCGB3A2. Interacts with NAXE and YJEFN3. Glycosylated. Post-translationally, palmitoylated. In terms of processing, phosphorylation sites are present in the extracellular medium.

Its subcellular location is the secreted. Its function is as follows. Participates in the reverse transport of cholesterol from tissues to the liver for excretion by promoting cholesterol efflux from tissues and by acting as a cofactor for the lecithin cholesterol acyltransferase (LCAT). As part of the SPAP complex, activates spermatozoa motility. The sequence is that of Apolipoprotein A-I (Apoa1) from Dipodomys ordii (Ord's kangaroo rat).